The chain runs to 115 residues: UPF0295 protein BPUM_0828 (115 aa).

2 helical membrane-spanning segments follow: residues 13 to 33 (TFAL…VFFK) and 41 to 61 (FFML…FWIG).

The protein belongs to the UPF0295 family.

It is found in the cell membrane. This is UPF0295 protein BPUM_0828 from Bacillus pumilus (strain SAFR-032).